The primary structure comprises 208 residues: Holliday junction branch migration complex subunit RuvA (208 aa).

Positions 1–67 are domain I; that stretch reads MIGWLHGTIG…EDGQQLYGFE (67 aa). Residues 68–146 are domain II; that stretch reads TKADRNLFRL…ERWQQQGGST (79 aa). Residues 147 to 157 are flexible linker; the sequence is PLRLVEPVAES. The segment at 157-208 is domain III; that stretch reads SRELRATLEALGYGPEEVSAAVAQAGSQGLDPEQPMEEWLRHCLAWLSRQAG.

Belongs to the RuvA family. Homotetramer. Forms an RuvA(8)-RuvB(12)-Holliday junction (HJ) complex. HJ DNA is sandwiched between 2 RuvA tetramers; dsDNA enters through RuvA and exits via RuvB. An RuvB hexamer assembles on each DNA strand where it exits the tetramer. Each RuvB hexamer is contacted by two RuvA subunits (via domain III) on 2 adjacent RuvB subunits; this complex drives branch migration. In the full resolvosome a probable DNA-RuvA(4)-RuvB(12)-RuvC(2) complex forms which resolves the HJ.

It localises to the cytoplasm. Its function is as follows. The RuvA-RuvB-RuvC complex processes Holliday junction (HJ) DNA during genetic recombination and DNA repair, while the RuvA-RuvB complex plays an important role in the rescue of blocked DNA replication forks via replication fork reversal (RFR). RuvA specifically binds to HJ cruciform DNA, conferring on it an open structure. The RuvB hexamer acts as an ATP-dependent pump, pulling dsDNA into and through the RuvAB complex. HJ branch migration allows RuvC to scan DNA until it finds its consensus sequence, where it cleaves and resolves the cruciform DNA. This is Holliday junction branch migration complex subunit RuvA from Synechococcus sp. (strain RCC307).